The primary structure comprises 316 residues: CRISPR-associated endonuclease Cas1 (316 aa).

The Mn(2+) site is built by glutamate 143, histidine 206, and glutamate 221.

It belongs to the CRISPR-associated endonuclease Cas1 family. Homodimer, forms a heterotetramer with a Cas2 homodimer. Mg(2+) serves as cofactor. Requires Mn(2+) as cofactor.

Its function is as follows. CRISPR (clustered regularly interspaced short palindromic repeat), is an adaptive immune system that provides protection against mobile genetic elements (viruses, transposable elements and conjugative plasmids). CRISPR clusters contain spacers, sequences complementary to antecedent mobile elements, and target invading nucleic acids. CRISPR clusters are transcribed and processed into CRISPR RNA (crRNA). Acts as a dsDNA endonuclease. Involved in the integration of spacer DNA into the CRISPR cassette. This chain is CRISPR-associated endonuclease Cas1, found in Aquifex aeolicus (strain VF5).